The sequence spans 68 residues: Protein SlyX homolog (68 aa).

This sequence belongs to the SlyX family.

This chain is Protein SlyX homolog, found in Brucella melitensis biotype 1 (strain ATCC 23456 / CCUG 17765 / NCTC 10094 / 16M).